An 87-amino-acid polypeptide reads, in one-letter code: U18-myrmicitoxin-Mri1a (87 aa).

A signal peptide spans Met-1–Pro-32. In terms of domain architecture, EGF-like spans Asn-33–Gln-77. 3 disulfide bridges follow: Cys-37/Cys-52, Cys-46/Cys-65, and Cys-67/Cys-76.

In terms of processing, O-glycosylated. In terms of tissue distribution, expressed by the venom gland.

The protein resides in the secreted. This chain is U18-myrmicitoxin-Mri1a, found in Manica rubida (European giant red ant).